Reading from the N-terminus, the 320-residue chain is MTVPFGFVVIDKPAGITSHDCVSRMRRVFGIKRVGHGGTLDPAVTGVLPIALGHATRLLPYLPGAKSYRGSIQLGQRTSSDDQQGDLISKQAWPELNTAEIEAYLEPFRGRIQQRPPQVSAVHVQGERAHARARRGETMEIPARTITIDRLQLLNWNQQLGQIDFNVHCSSGTYIRSLARDLGELIGCGACLGWLKRTQALGFHEQQAVPLPDRDNPALTTPPAVLPPLTALAHLPRLQLNEEEQESWSCGRRITAHQDQCQPAPKPLASDQQESAPNQTDPSANKSMLVVIDCRGEVAGMAYWEDNATVKPKVVFNAQG.

The Nucleophile role is filled by D41. 2 disordered regions span residues 116 to 136 (PPQVSAVHVQGERAHARARRG) and 259 to 284 (DQCQPAPKPLASDQQESAPNQTDPSA). The span at 125–136 (QGERAHARARRG) shows a compositional bias: basic and acidic residues. Positions 270–284 (SDQQESAPNQTDPSA) are enriched in polar residues.

This sequence belongs to the pseudouridine synthase TruB family. Type 1 subfamily.

The catalysed reaction is uridine(55) in tRNA = pseudouridine(55) in tRNA. In terms of biological role, responsible for synthesis of pseudouridine from uracil-55 in the psi GC loop of transfer RNAs. In Prochlorococcus marinus (strain MIT 9313), this protein is tRNA pseudouridine synthase B.